Reading from the N-terminus, the 192-residue chain is Ion-translocating oxidoreductase complex subunit A (192 aa).

A run of 6 helical transmembrane segments spans residues 5–25, 39–59, 63–83, 102–122, 134–154, and 171–191; these read ILLI…FLGL, IGMS…AYLI, ILTP…VIAV, LLGI…VALL, VIYG…FAAL, and SIAL…TGLV.

The protein belongs to the NqrDE/RnfAE family. As to quaternary structure, the complex is composed of six subunits: RnfA, RnfB, RnfC, RnfD, RnfE and RnfG.

Its subcellular location is the cell inner membrane. Part of a membrane-bound complex that couples electron transfer with translocation of ions across the membrane. This Pasteurella multocida (strain Pm70) protein is Ion-translocating oxidoreductase complex subunit A.